The primary structure comprises 61 residues: DNA-binding protein 7a (61 aa).

Positions 37–61 (NGKTGRGAVSEKDAPKELLEKLEKK) are disordered. A compositionally biased stretch (basic and acidic residues) spans 45–61 (VSEKDAPKELLEKLEKK).

Belongs to the 7 kDa DNA-binding/endoribonuclease P2 family. In terms of assembly, monomer.

The protein localises to the cytoplasm. Its function is as follows. Can constrain negative DNA supercoils. May be involved in maintaining the integrity of the genome at high temperature. This Acidianus hospitalis (strain W1) protein is DNA-binding protein 7a.